The chain runs to 689 residues: Translation initiation factor IF-2 (689 aa).

Residues 70 to 107 (VRSKKNSNKKKKKGKGNQDKRQENFAGKQQAQTVETPD) are disordered. Residues 71–84 (RSKKNSNKKKKKGK) show a composition bias toward basic residues. Residues 191–360 (ERPAVVTIMG…LLVSEVEEYK (170 aa)) form the tr-type G domain. Residues 200–207 (GHVDHGKT) form a G1 region. 200-207 (GHVDHGKT) is a binding site for GTP. The segment at 225–229 (GITQH) is G2. The segment at 246 to 249 (DTPG) is G3. Residues 246-250 (DTPGH) and 300-303 (NKMD) each bind GTP. Residues 300–303 (NKMD) are G4. The interval 336–338 (SAI) is G5.

Belongs to the TRAFAC class translation factor GTPase superfamily. Classic translation factor GTPase family. IF-2 subfamily.

It localises to the cytoplasm. Its function is as follows. One of the essential components for the initiation of protein synthesis. Protects formylmethionyl-tRNA from spontaneous hydrolysis and promotes its binding to the 30S ribosomal subunits. Also involved in the hydrolysis of GTP during the formation of the 70S ribosomal complex. This is Translation initiation factor IF-2 from Bacillus cytotoxicus (strain DSM 22905 / CIP 110041 / 391-98 / NVH 391-98).